We begin with the raw amino-acid sequence, 352 residues long: tRNA pseudouridine synthase D (352 aa).

The active-site Nucleophile is the Asp81. In terms of domain architecture, TRUD spans 158-306 (GVPNYFGQQR…RHERRTLLLK (149 aa)).

This sequence belongs to the pseudouridine synthase TruD family.

It carries out the reaction uridine(13) in tRNA = pseudouridine(13) in tRNA. Functionally, responsible for synthesis of pseudouridine from uracil-13 in transfer RNAs. The protein is tRNA pseudouridine synthase D of Photobacterium profundum (strain SS9).